The sequence spans 547 residues: CAP-Gly domain-containing linker protein 3 (547 aa).

The segment at 1-49 (MTKTDPAPMAPPPRGEEEEEEEEDEPVPEAPSPTQERRQKPVVHPSAPA) is disordered. The span at 16-27 (EEEEEEEEDEPV) shows a compositional bias: acidic residues. 3 ANK repeats span residues 117–155 (TDMTLLHYACKAGAHGVGDPAAAVRLSQQLLALGADVTL), 160–189 (TNMNALHYAAYFDVPDLVRVLLKGARPRVV), and 197–226 (NHGSALHIAASSLCLGAAKCLLEHGANPAL). One can recognise a CAP-Gly 1 domain in the interval 314–356 (GTTEFASGQWVGVELDEPEGKNDGSVGGVRYFICPPKQGLFAS). The tract at residues 365 to 413 (DAPPSSVTSTPRTPRMDFSRVTGKGRREHKGKKKTPSSPSLGSLQQRDR) is disordered. A compositionally biased stretch (low complexity) spans 367 to 377 (PPSSVTSTPRT). Threonine 374 is subject to Phosphothreonine. Residues 387-399 (GKGRREHKGKKKT) show a composition bias toward basic residues. Residues 400 to 409 (PSSPSLGSLQ) show a composition bias toward polar residues. Serine 401 carries the post-translational modification Phosphoserine. The region spanning 436-478 (GKTDFAPGYWYGIELDQPTGKHDGSVFGVRYFTCPPRHGVFAP) is the CAP-Gly 2 domain. The interval 488-547 (STDSPGDSVGAKKVHQVTMTQPKRTFTTVRTPKDIASENSISRLLFCCWFPWMLRAEMQS) is goLD. S-palmitoyl cysteine attachment occurs at residues cysteine 534 and cysteine 535.

As to quaternary structure, homodimer. Interacts with AKT1 and AKT2; when AKT1 and AKT2 are phosphorylated and activated, affinity is higher for AKT2. Interacts with ZDHHC13 (via ANK repeats). Interacts with ZDHHC17 (via ANK repeats). In terms of processing, palmitoylation by ZDHHC17 regulates association with the plasma membrane.

It is found in the cell membrane. The protein localises to the cytoplasm. The protein resides in the golgi apparatus. Its subcellular location is the golgi stack. Functions as a cytoplasmic linker protein. Involved in TGN-endosome dynamics. May modulate the cellular compartmentalization of AKT kinase family and promote its cell membrane localization, thereby playing a role in glucose transport in adipocytes. This chain is CAP-Gly domain-containing linker protein 3 (CLIP3), found in Pongo abelii (Sumatran orangutan).